The following is a 145-amino-acid chain: Small ribosomal subunit protein eS19 (145 aa).

Positions 120-145 (GGRRISENGQRDLDRIAAQTLEEDDE) are disordered. Positions 123–134 (RISENGQRDLDR) are enriched in basic and acidic residues.

It belongs to the eukaryotic ribosomal protein eS19 family. As to quaternary structure, component of the small ribosomal subunit. Mature ribosomes consist of a small (40S) and a large (60S) subunit. The 40S subunit contains about 32 different proteins and 1 molecule of RNA (18S). The 60S subunit contains 45 different proteins and 3 molecules of RNA (25S, 5.8S and 5S).

The protein localises to the cytoplasm. Component of the ribosome, a large ribonucleoprotein complex responsible for the synthesis of proteins in the cell. The small ribosomal subunit (SSU) binds messenger RNAs (mRNAs) and translates the encoded message by selecting cognate aminoacyl-transfer RNA (tRNA) molecules. The large subunit (LSU) contains the ribosomal catalytic site termed the peptidyl transferase center (PTC), which catalyzes the formation of peptide bonds, thereby polymerizing the amino acids delivered by tRNAs into a polypeptide chain. The nascent polypeptides leave the ribosome through a tunnel in the LSU and interact with protein factors that function in enzymatic processing, targeting, and the membrane insertion of nascent chains at the exit of the ribosomal tunnel. RPS19A is required for proper maturation of the small (40S) ribosomal subunit. In Candida albicans (strain SC5314 / ATCC MYA-2876) (Yeast), this protein is Small ribosomal subunit protein eS19 (RPS19A).